We begin with the raw amino-acid sequence, 260 residues long: Phosphate import ATP-binding protein PstB 1 (260 aa).

One can recognise an ABC transporter domain in the interval 13–255 (ISARDLNVHY…PQHPLTQGYI (243 aa)). ATP is bound at residue 45–52 (GPSGCGKS).

The protein belongs to the ABC transporter superfamily. Phosphate importer (TC 3.A.1.7) family. The complex is composed of two ATP-binding proteins (PstB), two transmembrane proteins (PstC and PstA) and a solute-binding protein (PstS).

It localises to the cell inner membrane. The catalysed reaction is phosphate(out) + ATP + H2O = ADP + 2 phosphate(in) + H(+). Part of the ABC transporter complex PstSACB involved in phosphate import. Responsible for energy coupling to the transport system. This Paramagnetospirillum magneticum (strain ATCC 700264 / AMB-1) (Magnetospirillum magneticum) protein is Phosphate import ATP-binding protein PstB 1.